A 69-amino-acid polypeptide reads, in one-letter code: DNA gyrase inhibitor YacG (69 aa).

The Zn(2+) site is built by Cys-13, Cys-16, Cys-32, and Cys-36.

The protein belongs to the DNA gyrase inhibitor YacG family. As to quaternary structure, interacts with GyrB. Zn(2+) serves as cofactor.

Functionally, inhibits all the catalytic activities of DNA gyrase by preventing its interaction with DNA. Acts by binding directly to the C-terminal domain of GyrB, which probably disrupts DNA binding by the gyrase. In Neisseria gonorrhoeae (strain ATCC 700825 / FA 1090), this protein is DNA gyrase inhibitor YacG.